The chain runs to 131 residues: Squamosa promoter-binding protein 1 (131 aa).

The segment covering 1–10 (MDTSKGEGKR) has biased composition (basic and acidic residues). Residues 1 to 52 (MDTSKGEGKRVIKLPGSQEQGEEEDDIGEDSKKTRALTPSGKRASGSTQRSC) are disordered. The SBP-type zinc finger occupies 49–126 (QRSCQVENCA…AGHNERRRKS (78 aa)). Positions 52, 57, 74, 77, 93, 96, 100, and 112 each coordinate Zn(2+). Positions 109–125 (KRSCRRRLAGHNERRRK) match the Bipartite nuclear localization signal motif.

It localises to the nucleus. In terms of biological role, probable transcriptional factor. Binds to the promoter of the SQUAMOSA gene. The sequence is that of Squamosa promoter-binding protein 1 (SBP1) from Antirrhinum majus (Garden snapdragon).